We begin with the raw amino-acid sequence, 173 residues long: MTRAFYIGRFQPYHFGHHTIIKQIAEEVDELVVGIGSAQKSHESTDPFTAGERVLMVYNALENLPIRHYVLPIEDIKYNSIWVHHVASRTPHFEVVYSNNPLVIQLFREAGVCVKQSPLYIRERYSGTEIRRRMIAGEKWEHLVPKSVVEVIKEIDGVTRLRNVSASDNNSSL.

The protein belongs to the archaeal NMN adenylyltransferase family.

Its subcellular location is the cytoplasm. It carries out the reaction beta-nicotinamide D-ribonucleotide + ATP + H(+) = diphosphate + NAD(+). It participates in cofactor biosynthesis; NAD(+) biosynthesis; NAD(+) from nicotinamide D-ribonucleotide: step 1/1. The protein is Nicotinamide-nucleotide adenylyltransferase of Methanosarcina barkeri (strain Fusaro / DSM 804).